A 308-amino-acid chain; its full sequence is Probable manganese-dependent inorganic pyrophosphatase (308 aa).

Mn(2+) contacts are provided by histidine 9, aspartate 13, aspartate 15, aspartate 74, histidine 96, and aspartate 148.

Belongs to the PPase class C family. Mn(2+) is required as a cofactor.

The protein localises to the cytoplasm. The catalysed reaction is diphosphate + H2O = 2 phosphate + H(+). The protein is Probable manganese-dependent inorganic pyrophosphatase of Oceanobacillus iheyensis (strain DSM 14371 / CIP 107618 / JCM 11309 / KCTC 3954 / HTE831).